The following is a 439-amino-acid chain: Proline--tRNA ligase (439 aa).

Belongs to the class-II aminoacyl-tRNA synthetase family. ProS type 2 subfamily. Homodimer.

The protein localises to the cytoplasm. The enzyme catalyses tRNA(Pro) + L-proline + ATP = L-prolyl-tRNA(Pro) + AMP + diphosphate. Catalyzes the attachment of proline to tRNA(Pro) in a two-step reaction: proline is first activated by ATP to form Pro-AMP and then transferred to the acceptor end of tRNA(Pro). The chain is Proline--tRNA ligase from Rhodopseudomonas palustris (strain BisA53).